The primary structure comprises 619 residues: Protein DFG16 (619 aa).

Methionine 1 is a topological domain (extracellular). Residues 2–22 (IIRLHFYYLLTLVYHLGLVGA) traverse the membrane as a helical segment. The Cytoplasmic segment spans residues 23-167 (YEKAARKRIQ…KDPFPLGMIM (145 aa)). Residues 33–54 (PPDLIPGPPGHKLGDERPPHYD) are disordered. Residues 44-54 (KLGDERPPHYD) are compositionally biased toward basic and acidic residues. The helical transmembrane segment at 168–188 (ITFASGCICVATWMLFLVVLL) threads the bilayer. Residues 189–203 (LPSDNHNRRNKVVHV) lie on the Extracellular side of the membrane. The chain crosses the membrane as a helical span at residues 204-224 (YVLFSAIIRTVFLNETIAVIF). The Cytoplasmic portion of the chain corresponds to 225–291 (DSQYHDDYQD…IPFKMKKGTH (67 aa)). The chain crosses the membrane as a helical span at residues 292–312 (IIITVGCFLSLADNILFANLL). The Extracellular segment spans residues 313–321 (WRKNLVVLK). The helical transmembrane segment at 322-342 (VFYKLIELLIYTIFISIICYF) threads the bilayer. Topologically, residues 343-378 (TWHNFAYILLPKTAEINTDGKCKTKLRILWENYHET) are cytoplasmic. The chain crosses the membrane as a helical span at residues 379-399 (IPLLAYNILIFILFYFTTIFF). Residues 400 to 410 (AAFTKHVRGWT) are Extracellular-facing. The helical transmembrane segment at 411–431 (FNFVHLLKVLITVNVWGLIGV) threads the bilayer. The Cytoplasmic segment spans residues 432–619 (LEKRELHISK…NHIYNYENSD (188 aa)). 2 stretches are compositionally biased toward polar residues: residues 485–504 (KSNTTSHDSSSLVGSPSPTW) and 526–549 (KFGQNPSFGSKSNGKPNTKTTLSK). Disordered regions lie at residues 485–506 (KSNTTSHDSSSLVGSPSPTWKS) and 520–586 (IMKS…ADKH). The segment covering 552-561 (QLLRKPRRKT) has biased composition (basic residues).

The protein localises to the membrane. Functionally, involved in invasion during filamentous growth. This Saccharomyces cerevisiae (strain ATCC 204508 / S288c) (Baker's yeast) protein is Protein DFG16 (DFG16).